Consider the following 557-residue polypeptide: UvrABC system protein C (557 aa).

The GIY-YIG domain maps to 14 to 89 (EEPGVYIFKN…IKKYRPKYNV (76 aa)). One can recognise a UVR domain in the interval 194–229 (EEVFDYLKEKMETHSRMLDFENAAKYRDLLLNLSNV).

The protein belongs to the UvrC family. Interacts with UvrB in an incision complex.

The protein localises to the cytoplasm. Its function is as follows. The UvrABC repair system catalyzes the recognition and processing of DNA lesions. UvrC both incises the 5' and 3' sides of the lesion. The N-terminal half is responsible for the 3' incision and the C-terminal half is responsible for the 5' incision. This Thermotoga petrophila (strain ATCC BAA-488 / DSM 13995 / JCM 10881 / RKU-1) protein is UvrABC system protein C.